We begin with the raw amino-acid sequence, 235 residues long: 7-cyano-7-deazaguanine synthase (235 aa).

10–20 (FSGGQDSTTCL) contacts ATP. Zn(2+) contacts are provided by Cys198, Cys213, Cys216, and Cys219.

The protein belongs to the QueC family. The cofactor is Zn(2+).

The enzyme catalyses 7-carboxy-7-deazaguanine + NH4(+) + ATP = 7-cyano-7-deazaguanine + ADP + phosphate + H2O + H(+). Its pathway is purine metabolism; 7-cyano-7-deazaguanine biosynthesis. Catalyzes the ATP-dependent conversion of 7-carboxy-7-deazaguanine (CDG) to 7-cyano-7-deazaguanine (preQ(0)). The protein is 7-cyano-7-deazaguanine synthase of Paracidovorax citrulli (strain AAC00-1) (Acidovorax citrulli).